Here is a 113-residue protein sequence, read N- to C-terminus: Gamma-glutamylcyclotransferase family protein YtfP (113 aa).

The protein belongs to the gamma-glutamylcyclotransferase family.

The sequence is that of Gamma-glutamylcyclotransferase family protein YtfP (ytfP) from Escherichia coli O157:H7.